The chain runs to 402 residues: Dihydrolipoyllysine-residue acetyltransferase component of pyruvate dehydrogenase complex (402 aa).

Residues 1 to 69 (MPDIGLEEVE…KTSSIIMIFK (69 aa)) enclose the Lipoyl-binding domain. N6-lipoyllysine is present on lysine 35. Positions 109–146 (HATPVVRRLARHLNVDLKNITPSGPKNRILKEDIELYI) constitute a Peripheral subunit-binding (PSBD) domain. Histidine 375 is an active-site residue.

The protein belongs to the 2-oxoacid dehydrogenase family. Forms a 24-polypeptide structural core with octahedral symmetry. (R)-lipoate is required as a cofactor.

The enzyme catalyses N(6)-[(R)-dihydrolipoyl]-L-lysyl-[protein] + acetyl-CoA = N(6)-[(R)-S(8)-acetyldihydrolipoyl]-L-lysyl-[protein] + CoA. In terms of biological role, the pyruvate dehydrogenase complex catalyzes the overall conversion of pyruvate to acetyl-CoA and CO(2). It contains multiple copies of three enzymatic components: pyruvate dehydrogenase (E1), dihydrolipoamide acetyltransferase (E2) and lipoamide dehydrogenase (E3). The polypeptide is Dihydrolipoyllysine-residue acetyltransferase component of pyruvate dehydrogenase complex (aceF) (Buchnera aphidicola subsp. Schizaphis graminum (strain Sg)).